The chain runs to 194 residues: Orotate phosphoribosyltransferase (194 aa).

E114 to S122 contacts 5-phospho-alpha-D-ribose 1-diphosphate. Orotate is bound by residues T118 and R146.

This sequence belongs to the purine/pyrimidine phosphoribosyltransferase family. PyrE subfamily. In terms of assembly, homodimer. Mg(2+) is required as a cofactor.

The enzyme catalyses orotidine 5'-phosphate + diphosphate = orotate + 5-phospho-alpha-D-ribose 1-diphosphate. The protein operates within pyrimidine metabolism; UMP biosynthesis via de novo pathway; UMP from orotate: step 1/2. Functionally, catalyzes the transfer of a ribosyl phosphate group from 5-phosphoribose 1-diphosphate to orotate, leading to the formation of orotidine monophosphate (OMP). The chain is Orotate phosphoribosyltransferase from Clostridioides difficile (strain 630) (Peptoclostridium difficile).